The primary structure comprises 138 residues: Putative pre-16S rRNA nuclease (138 aa).

Belongs to the YqgF nuclease family.

It localises to the cytoplasm. Functionally, could be a nuclease involved in processing of the 5'-end of pre-16S rRNA. In Mycoplasma genitalium (strain ATCC 33530 / DSM 19775 / NCTC 10195 / G37) (Mycoplasmoides genitalium), this protein is Putative pre-16S rRNA nuclease.